Consider the following 380-residue polypeptide: Cytochrome b (380 aa).

The next 4 helical transmembrane spans lie at 34–54 (FGSLLGICLLTQILTGLLLAT), 78–99 (WLIRNLHANGASFFFICIYLHI), 114–134 (WNTGIILLLALMATAFVGYVL), and 179–199 (FFALHFLLPFMIAGLAFIHLT). Heme b contacts are provided by His-84 and His-98. Heme b-binding residues include His-183 and His-197. His-202 lines the a ubiquinone pocket. The next 4 helical transmembrane spans lie at 227–247 (LKDILGFIVMFLPLTTLALFS), 289–309 (LGGVLALAASVLVLFLTPLLH), 321–341 (FSQFLFWTLVANLFILTWVGS), and 348–368 (FIIIGQLASLTYFTILLLLFP).

This sequence belongs to the cytochrome b family. The cytochrome bc1 complex contains 11 subunits: 3 respiratory subunits (MT-CYB, CYC1 and UQCRFS1), 2 core proteins (UQCRC1 and UQCRC2) and 6 low-molecular weight proteins (UQCRH/QCR6, UQCRB/QCR7, UQCRQ/QCR8, UQCR10/QCR9, UQCR11/QCR10 and a cleavage product of UQCRFS1). This cytochrome bc1 complex then forms a dimer. Heme b serves as cofactor.

It localises to the mitochondrion inner membrane. Functionally, component of the ubiquinol-cytochrome c reductase complex (complex III or cytochrome b-c1 complex) that is part of the mitochondrial respiratory chain. The b-c1 complex mediates electron transfer from ubiquinol to cytochrome c. Contributes to the generation of a proton gradient across the mitochondrial membrane that is then used for ATP synthesis. This chain is Cytochrome b (MT-CYB), found in Alle alle (Dovekie).